The primary structure comprises 687 residues: Putative metabolite transport protein YDL199C (687 aa).

Residues 1-22 (MKPPLNMSRSNKPLTQEANSSA) form a disordered region. Residues 1–122 (MKPPLNMSRS…RHSSRVLRTS (122 aa)) lie on the Extracellular side of the membrane. The segment covering 7-22 (MSRSNKPLTQEANSSA) has biased composition (polar residues). S90 carries the post-translational modification Phosphoserine. The helical transmembrane segment at 123–143 (FISFVVLVSSLSGLDQGLISG) threads the bilayer. Residues 144–164 (NVMTLSFQKYFHYPLTSPLGN) are Cytoplasmic-facing. A helical transmembrane segment spans residues 165 to 185 (IVSIVNLGAFMASLFVYSGIL). At 186–192 (EPCSRKK) the chain is on the extracellular side. The chain crosses the membrane as a helical span at residues 193 to 213 (MLQISTMIYSLGAIVQVLALN). Over 214–216 (QWC) the chain is Cytoplasmic. The chain crosses the membrane as a helical span at residues 217–237 (LLLGRFLLGVGMGFAFSMVII). Topologically, residues 238-251 (YQFEFPLPCIRKRT) are extracellular. The chain crosses the membrane as a helical span at residues 252–272 (LISIQCVSSVIAYSFGIWINC). The Cytoplasmic segment spans residues 273 to 283 (AFRYLGFAWRY). A helical membrane pass occupies residues 284–304 (PLSTHVALGIILNLMSFYLIL). Topologically, residues 305–410 (ESPSWLLKQK…MGRGERKSIY (106 aa)) are extracellular. The helical transmembrane segment at 411–431 (LTGLNALIYSIVILAYVPLVL) threads the bilayer. Over 432-439 (RKRKEKTN) the chain is Cytoplasmic. The chain crosses the membrane as a helical span at residues 440–460 (VLLGSIVMCALLFTISFTDWF). At 461-469 (PKSTTRYIS) the chain is on the extracellular side. Residues 470-490 (ILFAVFLFTHFISWDSIGWVM) traverse the membrane as a helical segment. Topologically, residues 491-500 (TIELLPHLSQ) are cytoplasmic. A helical transmembrane segment spans residues 501 to 521 (APVILLVSNFYWIFKWFVSLI). The Extracellular portion of the chain corresponds to 522–533 (TPILIDRLSWKF). The helical transmembrane segment at 534–554 (YLIPSLSSFISIIFVLKIFPI) threads the bilayer. Over 555–687 (ETRDERLDSD…QNSPGDMAVA (133 aa)) the chain is Cytoplasmic. 2 disordered regions span residues 561 to 587 (LDSD…SEFS) and 654 to 687 (SFHN…MAVA). The segment covering 660–673 (DPNISDNIAANKPS) has biased composition (polar residues).

This sequence belongs to the major facilitator superfamily. Sugar transporter (TC 2.A.1.1) family.

The protein resides in the membrane. The protein is Putative metabolite transport protein YDL199C of Saccharomyces cerevisiae (strain ATCC 204508 / S288c) (Baker's yeast).